The primary structure comprises 65 residues: Conotoxin VnMLCL-041 (65 aa).

Positions 1 to 19 (MLCLPVFIILLLLASPAAP) are cleaved as a signal peptide. The propeptide occupies 20–43 (NPLQTRIQSNLIRAGPEDANIKTD). A Lysine amide modification is found at lysine 64.

This sequence belongs to the conotoxin T superfamily. As to expression, expressed by the venom duct.

It localises to the secreted. The sequence is that of Conotoxin VnMLCL-041 from Conus ventricosus (Mediterranean cone).